The sequence spans 252 residues: uncharacterized protein (252 aa).

In terms of domain architecture, HTH deoR-type spans 3–58 (AKDRIQAIKQMVANDKKVTVSNLSGIFQVTEETIRRDLEKLEDEGFLTRTYGGAVL). Residues 20–39 (VTVSNLSGIFQVTEETIRRD) constitute a DNA-binding region (H-T-H motif).

This is an uncharacterized protein from Escherichia coli (strain K12).